The sequence spans 653 residues: Transmembrane and coiled-coil domains protein 1 (653 aa).

At Met-1 the chain carries N-acetylmethionine. 4 disordered regions span residues Met-1–Ser-35, His-58–Glu-78, Pro-112–Ser-165, and Thr-204–Pro-227. The Cytoplasmic portion of the chain corresponds to Met-1–Asn-591. Residues Gln-20–Leu-34 show a composition bias toward basic and acidic residues. Residues Ser-64–Gln-74 show a composition bias toward polar residues. Basic residues predominate over residues Pro-113–Arg-125. Over residues Pro-135–Glu-144 the composition is skewed to polar residues. Residues Arg-153–Ser-165 show a composition bias toward low complexity. The segment covering Thr-204 to Thr-218 has biased composition (polar residues). Positions Gln-228 to Gly-313 form a coiled coil. Residues Ser-382 and Ser-414 each carry the phosphoserine modification. A disordered region spans residues Pro-415 to Thr-437. Positions Ser-424–Thr-437 are enriched in polar residues. Residues Gly-458 to Gly-576 adopt a coiled-coil conformation. 2 helical membrane passes run Ile-592–Val-612 and Leu-625–Val-645. Over Glu-646–Arg-653 the chain is Cytoplasmic.

This sequence belongs to the TEX28 family. As to quaternary structure, may form homodimers and heterodimers with TMCC2 or TMCC3 via the coiled-coil domains. Interacts with ribosomal proteins RPL4 and RPS6.

It localises to the endoplasmic reticulum membrane. Endoplasmic reticulum membrane protein that promotes endoplasmic reticulum-associated endosome fission. Localizes to contact sites between the endoplasmic reticulum and endosomes and acts by promoting recruitment of the endoplasmic reticulum to endosome tubules for fission. Endosome membrane fission of early and late endosomes is essential to separate regions destined for lysosomal degradation from carriers to be recycled to the plasma membrane. The sequence is that of Transmembrane and coiled-coil domains protein 1 from Homo sapiens (Human).